The sequence spans 379 residues: uncharacterized protein (379 aa).

This sequence belongs to the mimivirus L17x/L18x family.

This is an uncharacterized protein from Acanthamoeba polyphaga mimivirus (APMV).